A 699-amino-acid polypeptide reads, in one-letter code: SHC SH2 domain-binding protein 1 homolog A (699 aa).

PbH1 repeat units lie at residues 480 to 502, 503 to 524, and 532 to 554; these read SAEL…EIYP, GSKC…LIKD, and IPKI…VLVK. Residues 603 to 627 adopt a coiled-coil conformation; it reads AVEHTNNLEKDQGNLAIAKEEVECE.

Its subcellular location is the midbody. The protein localises to the cytoplasm. The protein resides in the cytoskeleton. It localises to the spindle. Its function is as follows. May play a role in signaling pathways governing cellular proliferation. This Xenopus laevis (African clawed frog) protein is SHC SH2 domain-binding protein 1 homolog A (shcbp1-a).